The chain runs to 148 residues: uncharacterized protein (148 aa).

The 62-residue stretch at Leu3–Asp64 folds into the HTH asnC-type domain. The segment at residues Tyr22 to Lys41 is a DNA-binding region (H-T-H motif).

This is an uncharacterized protein from Pyrococcus horikoshii (strain ATCC 700860 / DSM 12428 / JCM 9974 / NBRC 100139 / OT-3).